We begin with the raw amino-acid sequence, 99 residues long: Aspartyl/glutamyl-tRNA(Asn/Gln) amidotransferase subunit C (99 aa).

Belongs to the GatC family. Heterotrimer of A, B and C subunits.

The enzyme catalyses L-glutamyl-tRNA(Gln) + L-glutamine + ATP + H2O = L-glutaminyl-tRNA(Gln) + L-glutamate + ADP + phosphate + H(+). It catalyses the reaction L-aspartyl-tRNA(Asn) + L-glutamine + ATP + H2O = L-asparaginyl-tRNA(Asn) + L-glutamate + ADP + phosphate + 2 H(+). Functionally, allows the formation of correctly charged Asn-tRNA(Asn) or Gln-tRNA(Gln) through the transamidation of misacylated Asp-tRNA(Asn) or Glu-tRNA(Gln) in organisms which lack either or both of asparaginyl-tRNA or glutaminyl-tRNA synthetases. The reaction takes place in the presence of glutamine and ATP through an activated phospho-Asp-tRNA(Asn) or phospho-Glu-tRNA(Gln). In Burkholderia vietnamiensis (strain G4 / LMG 22486) (Burkholderia cepacia (strain R1808)), this protein is Aspartyl/glutamyl-tRNA(Asn/Gln) amidotransferase subunit C.